The sequence spans 198 residues: uncharacterized protein (198 aa).

The interval 72 to 95 is disordered; it reads ESEEQYDSDDDNDKLVLNDDEDDE. Residues 75 to 94 are compositionally biased toward acidic residues; it reads EQYDSDDDNDKLVLNDDEDD. A coiled-coil region spans residues 106–136; that stretch reads EATNITNINKNIENIKNDMSNLNNMNDSNQK.

This is an uncharacterized protein from Plasmodium falciparum (isolate 3D7).